The primary structure comprises 914 residues: Isoleucine--tRNA ligase (914 aa).

Residues 64-74 (PYANGNFHLGH) carry the 'HIGH' region motif. Residue glutamate 557 coordinates L-isoleucyl-5'-AMP. A 'KMSKS' region motif is present at residues 598-602 (AMSKS). Lysine 601 lines the ATP pocket. Residues cysteine 889, cysteine 892, cysteine 906, and cysteine 909 each contribute to the Zn(2+) site.

Belongs to the class-I aminoacyl-tRNA synthetase family. IleS type 1 subfamily. In terms of assembly, monomer. It depends on Zn(2+) as a cofactor.

It localises to the cytoplasm. It catalyses the reaction tRNA(Ile) + L-isoleucine + ATP = L-isoleucyl-tRNA(Ile) + AMP + diphosphate. Functionally, catalyzes the attachment of isoleucine to tRNA(Ile). As IleRS can inadvertently accommodate and process structurally similar amino acids such as valine, to avoid such errors it has two additional distinct tRNA(Ile)-dependent editing activities. One activity is designated as 'pretransfer' editing and involves the hydrolysis of activated Val-AMP. The other activity is designated 'posttransfer' editing and involves deacylation of mischarged Val-tRNA(Ile). In Leptospira borgpetersenii serovar Hardjo-bovis (strain JB197), this protein is Isoleucine--tRNA ligase.